We begin with the raw amino-acid sequence, 344 residues long: Biotin synthase (344 aa).

One can recognise a Radical SAM core domain in the interval 40-267 (AEVQVSTLLS…KSMVRLSAGR (228 aa)). Cys55, Cys59, and Cys62 together coordinate [4Fe-4S] cluster. 4 residues coordinate [2Fe-2S] cluster: Cys99, Cys130, Cys190, and Arg262.

This sequence belongs to the radical SAM superfamily. Biotin synthase family. Homodimer. It depends on [4Fe-4S] cluster as a cofactor. [2Fe-2S] cluster serves as cofactor.

It catalyses the reaction (4R,5S)-dethiobiotin + (sulfur carrier)-SH + 2 reduced [2Fe-2S]-[ferredoxin] + 2 S-adenosyl-L-methionine = (sulfur carrier)-H + biotin + 2 5'-deoxyadenosine + 2 L-methionine + 2 oxidized [2Fe-2S]-[ferredoxin]. The protein operates within cofactor biosynthesis; biotin biosynthesis; biotin from 7,8-diaminononanoate: step 2/2. Catalyzes the conversion of dethiobiotin (DTB) to biotin by the insertion of a sulfur atom into dethiobiotin via a radical-based mechanism. The polypeptide is Biotin synthase (Xanthomonas campestris pv. campestris (strain 8004)).